The sequence spans 461 residues: Nucleobindin-1 (461 aa).

An N-terminal signal peptide occupies residues 1–26 (MPPSGPRGTLLLLPLLLLLLLRAVLA). The segment at 42 to 51 (TESPDTGLYY) is O-glycosylated at one site. Ser-86 is subject to Phosphoserine; by FAM20C. Residue Thr-148 is modified to Phosphothreonine; by FAM20C. Residues 150–218 (EARDLELLIQ…QQRRHREHPK (69 aa)) adopt a coiled-coil conformation. Residues 172–218 (HHEEFKRYEMLKEHERRRYLESLGEEQRKEAERKLEEQQRRHREHPK) mediate DNA binding. A compositionally biased stretch (basic and acidic residues) spans 193 to 210 (SLGEEQRKEAERKLEEQQ). The interval 193–221 (SLGEEQRKEAERKLEEQQRRHREHPKVNV) is disordered. The segment at 228-321 (LKEVWEELDG…VTLEEFLAST (94 aa)) is binds to GNAI2 and GNAI3. 2 consecutive EF-hand domains span residues 240–275 (PNRF…ELEK) and 292–327 (ERLR…KEFG). Ca(2+) is bound by residues Asp-253, Asn-255, Asp-257, Glu-264, Asp-305, Asn-307, Asp-309, and Glu-316. The GBA motif lies at 303–333 (NVDTNQDRLVTLEEFLASTQRKEFGDTGEGW). Positions 341-407 (AYTEEELRRF…QRKQQQQQQQ (67 aa)) form a coiled coil. Residues 368–461 (LSQETEALGR…LPEVEVPQHL (94 aa)) are disordered. Ser-369 is subject to Phosphoserine; by FAM20C. Over residues 437-461 (DQKEVDTSEKKLLERLPEVEVPQHL) the composition is skewed to basic and acidic residues.

The protein belongs to the nucleobindin family. As to quaternary structure, interacts (via GBA motif) with guanine nucleotide-binding protein G(i) alpha subunits GNAI1, GNAI2 and GNAI3 with higher affinity for GNAI1 and GNAI3 than for GNAI2. Preferentially interacts with inactive rather than active GNAI3. Interaction with GNAI3 is inhibited when NUCB1 binds calcium, probably due to a conformational change which renders the GBA motif inaccessible. In terms of processing, O-glycosylated. As to expression, expressed both in fetal and adult heart, lung, liver, kidney and brain, and in adult skeletal muscle, placenta and pancreas.

The protein resides in the golgi apparatus. The protein localises to the cis-Golgi network membrane. Its subcellular location is the cytoplasm. It localises to the secreted. Functionally, major calcium-binding protein of the Golgi which may have a role in calcium homeostasis. Acts as a non-receptor guanine nucleotide exchange factor which binds to and activates alpha subunits of guanine nucleotide-binding proteins (G proteins). In Homo sapiens (Human), this protein is Nucleobindin-1 (NUCB1).